A 155-amino-acid polypeptide reads, in one-letter code: Small ribosomal subunit protein uS7 (155 aa).

This sequence belongs to the universal ribosomal protein uS7 family. In terms of assembly, part of the 30S ribosomal subunit. Contacts proteins S9 and S11.

Its function is as follows. One of the primary rRNA binding proteins, it binds directly to 16S rRNA where it nucleates assembly of the head domain of the 30S subunit. Is located at the subunit interface close to the decoding center, probably blocks exit of the E-site tRNA. This chain is Small ribosomal subunit protein uS7, found in Nautilia profundicola (strain ATCC BAA-1463 / DSM 18972 / AmH).